Here is a 151-residue protein sequence, read N- to C-terminus: MVEAEVEVDVEIKSTADKFFMFSRRSQHASKATRYVQGCDLLEGEWGEVGSILLWKLTVDGEPKVSKDMIEAIDMKMNMIQWRVLEGPLKEEYNIFSKTMKVSPKQGGSGSVVKWNLKYERIDEKVAHLERLLQFFVECVNEIDQYLLSEG.

This sequence belongs to the MLP family.

This Arabidopsis thaliana (Mouse-ear cress) protein is MLP-like protein 168 (MLP168).